A 179-amino-acid chain; its full sequence is MVKVANKYAKALFDVSLDTNNLETINEELTVINEAVKDKIEQLKMVDSNPTQTAEQRRELINGVFTDINPYIKNMMYVLADNRHISLIADVFKAFQSLYNGHYNQDFATIESTYELSQEELDKIVKLVTQQTKLSKVIVDTKINPDLIGGFRVKVGTTVLDGSVRNDLVQLQRKFRRVN.

The protein belongs to the ATPase delta chain family. As to quaternary structure, F-type ATPases have 2 components, F(1) - the catalytic core - and F(0) - the membrane proton channel. F(1) has five subunits: alpha(3), beta(3), gamma(1), delta(1), epsilon(1). F(0) has three main subunits: a(1), b(2) and c(10-14). The alpha and beta chains form an alternating ring which encloses part of the gamma chain. F(1) is attached to F(0) by a central stalk formed by the gamma and epsilon chains, while a peripheral stalk is formed by the delta and b chains.

The protein resides in the cell membrane. Its function is as follows. F(1)F(0) ATP synthase produces ATP from ADP in the presence of a proton or sodium gradient. F-type ATPases consist of two structural domains, F(1) containing the extramembraneous catalytic core and F(0) containing the membrane proton channel, linked together by a central stalk and a peripheral stalk. During catalysis, ATP synthesis in the catalytic domain of F(1) is coupled via a rotary mechanism of the central stalk subunits to proton translocation. Functionally, this protein is part of the stalk that links CF(0) to CF(1). It either transmits conformational changes from CF(0) to CF(1) or is implicated in proton conduction. The polypeptide is ATP synthase subunit delta (Staphylococcus aureus (strain Mu50 / ATCC 700699)).